The chain runs to 129 residues: UPF0325 protein ECA1027 (129 aa).

The protein belongs to the UPF0325 family.

This Pectobacterium atrosepticum (strain SCRI 1043 / ATCC BAA-672) (Erwinia carotovora subsp. atroseptica) protein is UPF0325 protein ECA1027.